The following is a 124-amino-acid chain: Small ribosomal subunit protein uS12c (124 aa).

The protein belongs to the universal ribosomal protein uS12 family. As to quaternary structure, part of the 30S ribosomal subunit.

The protein localises to the plastid. Its function is as follows. With S4 and S5 plays an important role in translational accuracy. Located at the interface of the 30S and 50S subunits. In Helicosporidium sp. subsp. Simulium jonesii (Green alga), this protein is Small ribosomal subunit protein uS12c (rps12).